A 206-amino-acid chain; its full sequence is Recombination protein RecR (206 aa).

The C4-type zinc finger occupies 58–73; sequence CNICGYITEKNICNFC. Residues 81–178 form the Toprim domain; that stretch reads STIMIVADNR…KITKLAYGIP (98 aa).

It belongs to the RecR family.

In terms of biological role, may play a role in DNA repair. It seems to be involved in an RecBC-independent recombinational process of DNA repair. It may act with RecF and RecO. The sequence is that of Recombination protein RecR from Phytoplasma mali (strain AT).